The following is a 103-amino-acid chain: Small ribosomal subunit protein uS10 (103 aa).

The protein belongs to the universal ribosomal protein uS10 family. Part of the 30S ribosomal subunit.

Involved in the binding of tRNA to the ribosomes. The protein is Small ribosomal subunit protein uS10 of Chlorobium chlorochromatii (strain CaD3).